A 509-amino-acid polypeptide reads, in one-letter code: ESX-2 secretion system protein eccD2 (509 aa).

A run of 11 helical transmembrane segments spans residues 135 to 155 (LTAAHTAMAIIAMAVGVVLAL), 170 to 190 (AMAGGIGVLLVIGALVVWWGW), 196 to 216 (LFSGFGWLAVVLLAVAAACAP), 222 to 242 (AAHALIGLVVVVLGAITIGVA), 248 to 268 (QTAVVTAVVTVCGILAAVAAV), 281 to 301 (ICVLVGLLVLIRMTPTVALWV), 364 to 384 (VQVGMCVGVSLVLPAAVWGVL), 389 to 409 (PWAWLALLVAGLTVGLFITQG), 418 to 438 (AVALVCGASAAVCAGVLKYAL), 449 to 469 (LWPAIFVAAFAALGLAVALVV), and 487 to 507 (VLAMIALLPAAAALGGLFAWL).

This sequence belongs to the EccD/Snm4 family. As to quaternary structure, part of the ESX-2 / type VII secretion system (T7SS), which is composed of cytosolic and membrane components.

The protein resides in the cell membrane. The protein is ESX-2 secretion system protein eccD2 (eccD2) of Mycobacterium tuberculosis (strain CDC 1551 / Oshkosh).